The chain runs to 407 residues: Dual-specificity RNA methyltransferase RlmN (407 aa).

Residue E136 is the Proton acceptor of the active site. The region spanning 144–378 (REDRGAVCIS…MDAGFASPIR (235 aa)) is the Radical SAM core domain. Residues C151 and C389 are joined by a disulfide bond. Positions 158, 162, and 165 each coordinate [4Fe-4S] cluster. Residues 215–216 (GE), S247, 269–271 (SLH), and N346 contribute to the S-adenosyl-L-methionine site. C389 serves as the catalytic S-methylcysteine intermediate.

The protein belongs to the radical SAM superfamily. RlmN family. The cofactor is [4Fe-4S] cluster.

Its subcellular location is the cytoplasm. It carries out the reaction adenosine(2503) in 23S rRNA + 2 reduced [2Fe-2S]-[ferredoxin] + 2 S-adenosyl-L-methionine = 2-methyladenosine(2503) in 23S rRNA + 5'-deoxyadenosine + L-methionine + 2 oxidized [2Fe-2S]-[ferredoxin] + S-adenosyl-L-homocysteine. It catalyses the reaction adenosine(37) in tRNA + 2 reduced [2Fe-2S]-[ferredoxin] + 2 S-adenosyl-L-methionine = 2-methyladenosine(37) in tRNA + 5'-deoxyadenosine + L-methionine + 2 oxidized [2Fe-2S]-[ferredoxin] + S-adenosyl-L-homocysteine. Specifically methylates position 2 of adenine 2503 in 23S rRNA and position 2 of adenine 37 in tRNAs. m2A2503 modification seems to play a crucial role in the proofreading step occurring at the peptidyl transferase center and thus would serve to optimize ribosomal fidelity. The polypeptide is Dual-specificity RNA methyltransferase RlmN (Gluconobacter oxydans (strain 621H) (Gluconobacter suboxydans)).